A 409-amino-acid chain; its full sequence is Microfibrillar-associated protein 3-like (409 aa).

An N-terminal signal peptide occupies residues 1 to 28 (MGLLKSHLTVCLPPSVPFLILVSTLATA). Topologically, residues 29–148 (KSVTNSTLNG…TLRVIFTSGD (120 aa)) are extracellular. Asparagine 33, asparagine 37, asparagine 67, asparagine 111, and asparagine 135 each carry an N-linked (GlcNAc...) asparagine glycan. Positions 47 to 141 (PVIIARTDHI…GTINNTVTLR (95 aa)) constitute an Ig-like C2-type domain. A disulfide bond links cysteine 68 and cysteine 125. A helical membrane pass occupies residues 149-169 (MGVYYMVVCLVAFTIVMILNI). Residues 170–409 (TRLCMMSSHL…NTCIIYESHV (240 aa)) lie on the Cytoplasmic side of the membrane. Tyrosine 287 carries the phosphotyrosine modification. A phosphoserine mark is found at serine 298, serine 303, serine 306, and serine 307. A disordered region spans residues 319-392 (VSVHPQSKKD…LPPAHLETTE (74 aa)). Positions 333–348 (QEGENLEVKDEEETEP) are enriched in acidic residues. Positions 362-372 (DITTTELTSEE) are enriched in polar residues.

The protein localises to the cell membrane. The protein resides in the nucleus. It localises to the cytoplasm. Its function is as follows. May participate in the nuclear signaling of EGFR and MAPK1/ERK2. The chain is Microfibrillar-associated protein 3-like (Mfap3l) from Rattus norvegicus (Rat).